The chain runs to 304 residues: Aspartate carbamoyltransferase catalytic subunit (304 aa).

Carbamoyl phosphate is bound by residues R57 and T58. Residue K86 participates in L-aspartate binding. Residues R107, H135, and Q138 each contribute to the carbamoyl phosphate site. L-aspartate contacts are provided by R168 and R229. Residues L266 and P267 each coordinate carbamoyl phosphate.

It belongs to the aspartate/ornithine carbamoyltransferase superfamily. ATCase family. In terms of assembly, heterooligomer of catalytic and regulatory chains.

It carries out the reaction carbamoyl phosphate + L-aspartate = N-carbamoyl-L-aspartate + phosphate + H(+). It participates in pyrimidine metabolism; UMP biosynthesis via de novo pathway; (S)-dihydroorotate from bicarbonate: step 2/3. In terms of biological role, catalyzes the condensation of carbamoyl phosphate and aspartate to form carbamoyl aspartate and inorganic phosphate, the committed step in the de novo pyrimidine nucleotide biosynthesis pathway. This Methanosphaera stadtmanae (strain ATCC 43021 / DSM 3091 / JCM 11832 / MCB-3) protein is Aspartate carbamoyltransferase catalytic subunit.